A 435-amino-acid polypeptide reads, in one-letter code: tRNA-2-methylthio-N(6)-dimethylallyladenosine synthase (435 aa).

One can recognise an MTTase N-terminal domain in the interval 5 to 120 (KKLFIETLGC…ISEVLHKERA (116 aa)). 6 residues coordinate [4Fe-4S] cluster: Cys-14, Cys-51, Cys-83, Cys-152, Cys-156, and Cys-159. The 235-residue stretch at 138–372 (RTSPYKAYIN…NLAVNILDEK (235 aa)) folds into the Radical SAM core domain. In terms of domain architecture, TRAM spans 374-435 (KTHLGKIYRV…RTILSGEIVG (62 aa)).

The protein belongs to the methylthiotransferase family. MiaB subfamily. As to quaternary structure, monomer. [4Fe-4S] cluster is required as a cofactor.

The protein localises to the cytoplasm. It carries out the reaction N(6)-dimethylallyladenosine(37) in tRNA + (sulfur carrier)-SH + AH2 + 2 S-adenosyl-L-methionine = 2-methylsulfanyl-N(6)-dimethylallyladenosine(37) in tRNA + (sulfur carrier)-H + 5'-deoxyadenosine + L-methionine + A + S-adenosyl-L-homocysteine + 2 H(+). Its function is as follows. Catalyzes the methylthiolation of N6-(dimethylallyl)adenosine (i(6)A), leading to the formation of 2-methylthio-N6-(dimethylallyl)adenosine (ms(2)i(6)A) at position 37 in tRNAs that read codons beginning with uridine. The sequence is that of tRNA-2-methylthio-N(6)-dimethylallyladenosine synthase from Sulfurimonas denitrificans (strain ATCC 33889 / DSM 1251) (Thiomicrospira denitrificans (strain ATCC 33889 / DSM 1251)).